The chain runs to 507 residues: Histidine ammonia-lyase (507 aa).

Residues A141 to G143 constitute a cross-link (5-imidazolinone (Ala-Gly)). S142 carries the 2,3-didehydroalanine (Ser) modification.

Belongs to the PAL/histidase family. Contains an active site 4-methylidene-imidazol-5-one (MIO), which is formed autocatalytically by cyclization and dehydration of residues Ala-Ser-Gly.

The protein localises to the cytoplasm. The catalysed reaction is L-histidine = trans-urocanate + NH4(+). The protein operates within amino-acid degradation; L-histidine degradation into L-glutamate; N-formimidoyl-L-glutamate from L-histidine: step 1/3. This is Histidine ammonia-lyase from Burkholderia ambifaria (strain MC40-6).